The sequence spans 420 residues: Dynein axonemal assembly factor 4 (420 aa).

The CS domain maps to 3-87 (LQVSDYSWQQ…KEAAMWETLS (85 aa)). The tract at residues 7–103 (DYSWQQTKTA…ETMQRIREKS (97 aa)) is mediates interaction with ESR1 and STUB1. TPR repeat units follow at residues 290–323 (PEWL…NNKM), 324–357 (PLLY…LMPP), and 366–399 (MKAH…DPSN).

Interacts with ZMYND10. Interacts with STUB1. Interacts with ESR1 and ESR2. Interacts with DNAAF2. Interacts with CCT3, CCT4, CCT5 and CCT8. Interacts with DNAAF6/PIH1D3.

The protein localises to the nucleus. Its subcellular location is the cytoplasm. The protein resides in the cell projection. It localises to the neuron projection. It is found in the dynein axonemal particle. Its function is as follows. Involved in neuronal migration during development of the cerebral neocortex. May regulate the stability and proteasomal degradation of the estrogen receptors that play an important role in neuronal differentiation, survival and plasticity. Axonemal dynein assembly factor required for ciliary motility. The sequence is that of Dynein axonemal assembly factor 4 from Pongo pygmaeus (Bornean orangutan).